Here is a 215-residue protein sequence, read N- to C-terminus: Redox-sensing transcriptional repressor Rex 2 (215 aa).

A DNA-binding region (H-T-H motif) is located at residues Val15–Val54. NAD(+) is bound at residue Gly89 to Gly94.

This sequence belongs to the transcriptional regulatory Rex family. As to quaternary structure, homodimer.

The protein localises to the cytoplasm. Modulates transcription in response to changes in cellular NADH/NAD(+) redox state. The sequence is that of Redox-sensing transcriptional repressor Rex 2 from Enterococcus faecalis (strain ATCC 700802 / V583).